A 157-amino-acid polypeptide reads, in one-letter code: DNA gyrase inhibitor (157 aa).

It belongs to the DNA gyrase inhibitor family. In terms of assembly, interacts with DNA gyrase.

The protein localises to the cytoplasm. Inhibits the supercoiling activity of DNA gyrase. Acts by inhibiting DNA gyrase at an early step, prior to (or at the step of) binding of DNA by the gyrase. It protects cells against toxins that target DNA gyrase, by inhibiting activity of these toxins and reducing the formation of lethal double-strand breaks in the cell. This chain is DNA gyrase inhibitor, found in Citrobacter rodentium (strain ICC168) (Citrobacter freundii biotype 4280).